A 258-amino-acid chain; its full sequence is MGLFDRIKRVVSSNLNDLVNKAEDPEKMLEQAILEMQEDLVQLRQGVAQAIAAQKRSEKQYNDAQNEINKWQRNAQLALQKGDENLARQALERKKTYTDTSAALKASLDTQSTQVETLKRNLIQLESKISEAKTKKEMLKARITTAKAQEQLQGMVRGMNTSSAMSAFERMEEKVLMQESRAQALGELAGADLETQFAQLEGGSDVDDELAALKAQMLPPATPVTQAQLPPQQETTPAKSNEVVDAELDSLRKQLDQL.

The tract at residues methionine 217–leucine 258 is disordered. Over residues proline 223–lysine 239 the composition is skewed to polar residues. Residues aspartate 249–leucine 258 show a composition bias toward basic and acidic residues.

It belongs to the PspA/Vipp/IM30 family. As to quaternary structure, polymerizes to form rings, filaments and ribbons. Rings are formed by stacked rungs that tilt to give a dome-shaped curvature. Rings form with symmetries ranging from C11 (55 subunits) to C17 (119 subunits).

The protein resides in the cell inner membrane. In terms of biological role, a membrane remodeling protein capable of forming rings and/or filaments on membranes, which then curve and tubulate the bilayer. Rings will form on liposomes, altering their positive curvature so the lipid bilayer is remodeled into a negative curve as the membrane enters the ring. Ring stacks of varying lengths can be seen joining isolated liposomes. A lipid monolayer can be drawn into the center of the rings. Required for thylakoid formation. The sequence is that of Membrane-associated protein Vipp1 from Nostoc punctiforme (strain ATCC 29133 / PCC 73102).